An 83-amino-acid polypeptide reads, in one-letter code: Small ribosomal subunit protein uS17 (83 aa).

The protein belongs to the universal ribosomal protein uS17 family. In terms of assembly, part of the 30S ribosomal subunit.

One of the primary rRNA binding proteins, it binds specifically to the 5'-end of 16S ribosomal RNA. This Campylobacter hominis (strain ATCC BAA-381 / DSM 21671 / CCUG 45161 / LMG 19568 / NCTC 13146 / CH001A) protein is Small ribosomal subunit protein uS17.